The sequence spans 349 residues: Phosphoribosylformylglycinamidine cyclo-ligase (349 aa).

This sequence belongs to the AIR synthase family.

It localises to the cytoplasm. It carries out the reaction 2-formamido-N(1)-(5-O-phospho-beta-D-ribosyl)acetamidine + ATP = 5-amino-1-(5-phospho-beta-D-ribosyl)imidazole + ADP + phosphate + H(+). Its pathway is purine metabolism; IMP biosynthesis via de novo pathway; 5-amino-1-(5-phospho-D-ribosyl)imidazole from N(2)-formyl-N(1)-(5-phospho-D-ribosyl)glycinamide: step 2/2. The chain is Phosphoribosylformylglycinamidine cyclo-ligase from Listeria monocytogenes serotype 4a (strain HCC23).